Here is a 374-residue protein sequence, read N- to C-terminus: tRNA-specific 2-thiouridylase MnmA (374 aa).

Residues 10-17 (AMSGGVDS) and leucine 36 each bind ATP. Residue cysteine 111 is the Nucleophile of the active site. Cysteine 111 and cysteine 209 are disulfide-bonded. Glycine 135 provides a ligand contact to ATP. The tract at residues 159–161 (KDQ) is interaction with tRNA. Cysteine 209 acts as the Cysteine persulfide intermediate in catalysis.

The protein belongs to the MnmA/TRMU family.

It localises to the cytoplasm. The enzyme catalyses S-sulfanyl-L-cysteinyl-[protein] + uridine(34) in tRNA + AH2 + ATP = 2-thiouridine(34) in tRNA + L-cysteinyl-[protein] + A + AMP + diphosphate + H(+). Catalyzes the 2-thiolation of uridine at the wobble position (U34) of tRNA, leading to the formation of s(2)U34. This Acidobacterium capsulatum (strain ATCC 51196 / DSM 11244 / BCRC 80197 / JCM 7670 / NBRC 15755 / NCIMB 13165 / 161) protein is tRNA-specific 2-thiouridylase MnmA.